A 93-amino-acid chain; its full sequence is Integration host factor subunit beta (93 aa).

The protein belongs to the bacterial histone-like protein family. Heterodimer of an alpha and a beta chain.

This protein is one of the two subunits of integration host factor, a specific DNA-binding protein that functions in genetic recombination as well as in transcriptional and translational control. The chain is Integration host factor subunit beta (ihfB) from Mannheimia haemolytica (Pasteurella haemolytica).